Consider the following 382-residue polypeptide: Probable protein phosphatase 2C 65 (382 aa).

In terms of domain architecture, PPM-type phosphatase spans 47-337 (HVSMSIKQGK…DDCAVVVLYL (291 aa)). Residues aspartate 83 and glycine 84 each contribute to the Mn(2+) site. The tract at residues 107 to 126 (KIRSSKSAGDENIENNSSQS) is disordered. Mn(2+) is bound by residues aspartate 282 and aspartate 328.

The protein belongs to the PP2C family. Mg(2+) is required as a cofactor. Mn(2+) serves as cofactor.

It carries out the reaction O-phospho-L-seryl-[protein] + H2O = L-seryl-[protein] + phosphate. It catalyses the reaction O-phospho-L-threonyl-[protein] + H2O = L-threonyl-[protein] + phosphate. This is Probable protein phosphatase 2C 65 from Arabidopsis thaliana (Mouse-ear cress).